An 874-amino-acid chain; its full sequence is Alanine--tRNA ligase (874 aa).

The Zn(2+) site is built by H562, H566, C665, and H669.

Belongs to the class-II aminoacyl-tRNA synthetase family. It depends on Zn(2+) as a cofactor.

It localises to the cytoplasm. It catalyses the reaction tRNA(Ala) + L-alanine + ATP = L-alanyl-tRNA(Ala) + AMP + diphosphate. Catalyzes the attachment of alanine to tRNA(Ala) in a two-step reaction: alanine is first activated by ATP to form Ala-AMP and then transferred to the acceptor end of tRNA(Ala). Also edits incorrectly charged Ser-tRNA(Ala) and Gly-tRNA(Ala) via its editing domain. The sequence is that of Alanine--tRNA ligase from Pseudomonas putida (strain W619).